Here is a 360-residue protein sequence, read N- to C-terminus: Iron uptake protein A1 (360 aa).

The N-terminal stretch at 1 to 28 is a signal peptide; sequence MVQKLSRRLFLSIGTAFTVVVGSQLLSS. Residue Cys29 is the site of N-palmitoyl cysteine attachment. A lipid anchor (S-diacylglycerol cysteine) is attached at Cys29. Positions 54, 55, 185, 241, and 242 each coordinate Fe cation.

Belongs to the bacterial solute-binding protein 1 family.

Its subcellular location is the cellular thylakoid membrane. The protein localises to the cell membrane. Plays an important role in protecting the acceptor side of photosystem II (PSII) against oxidative damage, especially under iron-limiting growth conditions. The differing subcellular locations of futA1 (predominantly thylakoid lumen) and futA2 (predominantly periplasmic) suggest they may fulfill different roles. Its function is as follows. A major iron-binding protein involved in Fe(3+) uptake, probably part of a periplasmic ABC transporter complex futA1A2BC (TC 3.A.1.10.2) involved in Fe(3+) ion import (ferric iron). This protein and futA2 (slr0531) may be subunit proteins that have redundant or overlapping substrate-binding functions. The sequence is that of Iron uptake protein A1 (futA1) from Synechocystis sp. (strain ATCC 27184 / PCC 6803 / Kazusa).